Consider the following 223-residue polypeptide: Nicotinamide/nicotinic acid mononucleotide adenylyltransferase 2 (223 aa).

2 residues coordinate NAD(+): Ser-11 and Phe-12. Residue His-19 participates in ATP binding. NAD(+)-binding residues include Trp-87, Thr-90, Gly-116, Asp-118, Leu-133, Trp-134, and Arg-153. ATP is bound at residue Thr-190–Arg-191.

Belongs to the eukaryotic NMN adenylyltransferase family. A divalent metal cation is required as a cofactor.

The catalysed reaction is beta-nicotinamide D-ribonucleotide + ATP + H(+) = diphosphate + NAD(+). It carries out the reaction nicotinate beta-D-ribonucleotide + ATP + H(+) = deamido-NAD(+) + diphosphate. Its pathway is cofactor biosynthesis; NAD(+) biosynthesis; deamido-NAD(+) from nicotinate D-ribonucleotide: step 1/1. It participates in cofactor biosynthesis; NAD(+) biosynthesis; NAD(+) from nicotinamide D-ribonucleotide: step 1/1. Functionally, catalyzes the formation of NAD(+) from nicotinamide mononucleotide (NMN) and ATP. Can also use the deamidated form; nicotinic acid mononucleotide (NaMN) as substrate. The chain is Nicotinamide/nicotinic acid mononucleotide adenylyltransferase 2 from Caenorhabditis elegans.